The following is a 150-amino-acid chain: Protein SprT-like (150 aa).

A SprT-like domain is found at 11–149 (ELVDKLSLTY…CGKCRGSLKE (139 aa)). A Zn(2+)-binding site is contributed by H70. E71 is an active-site residue. H74 contacts Zn(2+).

This sequence belongs to the SprT family. Requires Zn(2+) as cofactor.

It is found in the cytoplasm. The chain is Protein SprT-like from Oceanobacillus iheyensis (strain DSM 14371 / CIP 107618 / JCM 11309 / KCTC 3954 / HTE831).